The primary structure comprises 322 residues: tRNA uridine(34) hydroxylase (322 aa).

Positions 125–219 constitute a Rhodanese domain; sequence QQEDTIVVDA…YGKDPEVQGE (95 aa). Cysteine 179 acts as the Cysteine persulfide intermediate in catalysis.

The protein belongs to the TrhO family.

It carries out the reaction uridine(34) in tRNA + AH2 + O2 = 5-hydroxyuridine(34) in tRNA + A + H2O. Catalyzes oxygen-dependent 5-hydroxyuridine (ho5U) modification at position 34 in tRNAs. In Bacillus licheniformis (strain ATCC 14580 / DSM 13 / JCM 2505 / CCUG 7422 / NBRC 12200 / NCIMB 9375 / NCTC 10341 / NRRL NRS-1264 / Gibson 46), this protein is tRNA uridine(34) hydroxylase.